The sequence spans 265 residues: H-2 class II histocompatibility antigen, A-D beta chain (265 aa).

Residues 1 to 27 (MALQIPSLLLSAAVVVLMVLSSPRTEG) form the signal peptide. The tract at residues 28 to 122 (GNSERHFVVQ…PETSTSLRRL (95 aa)) is beta-1. Residues 28–226 (GNSERHFVVQ…RAQSESARSK (199 aa)) lie on the Extracellular side of the membrane. 2 disulfides stabilise this stretch: cysteine 42-cysteine 106 and cysteine 145-cysteine 201. The N-linked (GlcNAc...) asparagine glycan is linked to asparagine 46. A beta-2 region spans residues 123–216 (EQPNVAISLS…SLKSPITVEW (94 aa)). Residues 125 to 213 (PNVAISLSRT…EHPSLKSPIT (89 aa)) form the Ig-like C1-type domain. The tract at residues 217-226 (RAQSESARSK) is connecting peptide. The chain crosses the membrane as a helical span at residues 227-247 (MLSGIGGCVLGVIFLGLGLFI). At 248–265 (RHRSQKGPRGPPPAGLLQ) the chain is on the cytoplasmic side.

The protein belongs to the MHC class II family. Post-translationally, ubiquitinated in immature dendritic cells leading to down-regulation of MHC class II.

It is found in the membrane. In Mus musculus (Mouse), this protein is H-2 class II histocompatibility antigen, A-D beta chain (H2-Ab1).